The sequence spans 84 residues: Exodeoxyribonuclease 7 small subunit (84 aa).

Belongs to the XseB family. In terms of assembly, heterooligomer composed of large and small subunits.

Its subcellular location is the cytoplasm. The enzyme catalyses Exonucleolytic cleavage in either 5'- to 3'- or 3'- to 5'-direction to yield nucleoside 5'-phosphates.. Functionally, bidirectionally degrades single-stranded DNA into large acid-insoluble oligonucleotides, which are then degraded further into small acid-soluble oligonucleotides. In Yersinia pseudotuberculosis serotype O:3 (strain YPIII), this protein is Exodeoxyribonuclease 7 small subunit.